Here is a 302-residue protein sequence, read N- to C-terminus: MFKRKSTAELAAQMAKLAGNKGGFSSEDKGEWKLKLDNAGNGQAVIRFLPSKNDEQAPFAILVNHGFKKNGKWYIENCSSTHGDYDSCPVCQYISKNDLYNTDNKEYGLVKRKTSYWANILVVKDPAAPENEGKVFKYRFGKKIWDKINAMIAVDVEMGETPVDVTCPWEGANFVLKVKQVSGFSNYDESKFLNQSAIPNIDDESFQKELFEQMVDLSEMTSKDKFKSFEELSTKFSQVMGTAAMGGAAATAAKKADKVADDLDAFNVDDFNTKTEDDFMSSSSGSSSSADDTDLDDLLNDL.

The tract at residues 3–7 is LAST; it reads KRKST. Residues histidine 65, cysteine 78, cysteine 88, and cysteine 91 each contribute to the Zn(2+) site. The disordered stretch occupies residues 273-302; the sequence is TKTEDDFMSSSSGSSSSADDTDLDDLLNDL. Over residues 280 to 290 the composition is skewed to low complexity; sequence MSSSSGSSSSA. Positions 291 to 302 are enriched in acidic residues; it reads DDTDLDDLLNDL.

The protein belongs to the Tequatrovirus single-stranded DNA-binding protein family. Homodimer in the absence of DNA, monomer when binding DNA. Interacts with the DNA helicase assembly protein; a ternary complex between the helicase assembly protein, the single-stranded DNA-binding protein and ssDNA is an obligatory intermediate in the helicase loading mechanism. Part of the replicase complex that includes the DNA polymerase, the polymerase clamp, the clamp loader complex, the single-stranded DNA binding protein, the primase, the DnaB-like SF4 replicative helicase and the helicase assembly factor. Interacts (via C-terminus) with the viral SF1 dDA helicase. Interacts with the viral SF2 UvsW repair helicase.

In terms of biological role, single-stranded DNA-binding protein that participates in viral DNA replication, recombination, and repair. Coats the lagging-strand ssDNA as the replication fork advances. Stimulates the activities of viral DNA polymerase and DnaB-like SF4 replicative helicase, probably via its interaction with the helicase assembly factor. Together with DnaB-like SF4 replicative helicase and the helicase assembly factor, promotes pairing of two homologous DNA molecules containing complementary single-stranded regions and mediates homologous DNA strand exchange. Also promotes the formation of joint molecules. mRNA specific autogenous translational repressor. This chain is Single-stranded DNA-binding protein, found in Escherichia coli (Bacteriophage T2).